We begin with the raw amino-acid sequence, 281 residues long: Bis(5'-nucleosyl)-tetraphosphatase, symmetrical (281 aa).

It belongs to the Ap4A hydrolase family.

The enzyme catalyses P(1),P(4)-bis(5'-adenosyl) tetraphosphate + H2O = 2 ADP + 2 H(+). In terms of biological role, hydrolyzes diadenosine 5',5'''-P1,P4-tetraphosphate to yield ADP. The chain is Bis(5'-nucleosyl)-tetraphosphatase, symmetrical from Pectobacterium atrosepticum (strain SCRI 1043 / ATCC BAA-672) (Erwinia carotovora subsp. atroseptica).